The primary structure comprises 408 residues: S-adenosylmethionine:tRNA ribosyltransferase-isomerase (408 aa).

It belongs to the QueA family. As to quaternary structure, monomer.

It localises to the cytoplasm. It carries out the reaction 7-aminomethyl-7-carbaguanosine(34) in tRNA + S-adenosyl-L-methionine = epoxyqueuosine(34) in tRNA + adenine + L-methionine + 2 H(+). It functions in the pathway tRNA modification; tRNA-queuosine biosynthesis. Its function is as follows. Transfers and isomerizes the ribose moiety from AdoMet to the 7-aminomethyl group of 7-deazaguanine (preQ1-tRNA) to give epoxyqueuosine (oQ-tRNA). The chain is S-adenosylmethionine:tRNA ribosyltransferase-isomerase from Trichormus variabilis (strain ATCC 29413 / PCC 7937) (Anabaena variabilis).